The following is a 479-amino-acid chain: Proline--tRNA ligase (479 aa).

The protein belongs to the class-II aminoacyl-tRNA synthetase family. ProS type 3 subfamily. Homodimer.

It is found in the cytoplasm. The enzyme catalyses tRNA(Pro) + L-proline + ATP = L-prolyl-tRNA(Pro) + AMP + diphosphate. Catalyzes the attachment of proline to tRNA(Pro) in a two-step reaction: proline is first activated by ATP to form Pro-AMP and then transferred to the acceptor end of tRNA(Pro). This Agathobacter rectalis (strain ATCC 33656 / DSM 3377 / JCM 17463 / KCTC 5835 / VPI 0990) (Eubacterium rectale) protein is Proline--tRNA ligase.